The primary structure comprises 172 residues: Adenine phosphoribosyltransferase (172 aa).

It belongs to the purine/pyrimidine phosphoribosyltransferase family. Homodimer.

It localises to the cytoplasm. It carries out the reaction AMP + diphosphate = 5-phospho-alpha-D-ribose 1-diphosphate + adenine. It functions in the pathway purine metabolism; AMP biosynthesis via salvage pathway; AMP from adenine: step 1/1. In terms of biological role, catalyzes a salvage reaction resulting in the formation of AMP, that is energically less costly than de novo synthesis. In Malacoplasma penetrans (strain HF-2) (Mycoplasma penetrans), this protein is Adenine phosphoribosyltransferase.